We begin with the raw amino-acid sequence, 596 residues long: NADH-quinone oxidoreductase subunit C/D (596 aa).

Positions 1-186 (MTDLTAQEPA…SPFELTKAKQ (186 aa)) are NADH dehydrogenase I subunit C. An NADH dehydrogenase I subunit D region spans residues 210 to 596 (DFMFLNLGPN…IDFVMSDVDR (387 aa)).

In the N-terminal section; belongs to the complex I 30 kDa subunit family. This sequence in the C-terminal section; belongs to the complex I 49 kDa subunit family. NDH-1 is composed of 13 different subunits. Subunits NuoB, CD, E, F, and G constitute the peripheral sector of the complex.

The protein localises to the cell inner membrane. It carries out the reaction a quinone + NADH + 5 H(+)(in) = a quinol + NAD(+) + 4 H(+)(out). Functionally, NDH-1 shuttles electrons from NADH, via FMN and iron-sulfur (Fe-S) centers, to quinones in the respiratory chain. The immediate electron acceptor for the enzyme in this species is believed to be ubiquinone. Couples the redox reaction to proton translocation (for every two electrons transferred, four hydrogen ions are translocated across the cytoplasmic membrane), and thus conserves the redox energy in a proton gradient. The protein is NADH-quinone oxidoreductase subunit C/D of Shigella flexneri serotype 5b (strain 8401).